We begin with the raw amino-acid sequence, 282 residues long: Probable septum site-determining protein MinC (282 aa).

The segment at 103–147 (SQSRRGGKDEAPKEKAGKPEATAASGQTDAEAAGNTGKGKDSEGA) is disordered. Over residues 104–120 (QSRRGGKDEAPKEKAGK) the composition is skewed to basic and acidic residues.

Belongs to the MinC family. Interacts with MinD and FtsZ.

In terms of biological role, cell division inhibitor that blocks the formation of polar Z ring septums. Rapidly oscillates between the poles of the cell to destabilize FtsZ filaments that have formed before they mature into polar Z rings. Prevents FtsZ polymerization. The sequence is that of Probable septum site-determining protein MinC from Cupriavidus metallidurans (strain ATCC 43123 / DSM 2839 / NBRC 102507 / CH34) (Ralstonia metallidurans).